Here is a 454-residue protein sequence, read N- to C-terminus: Mitochondrial dynamics protein MID49 (454 aa).

The Mitochondrial intermembrane segment spans residues 1–22 (MAEFSQKQRKQSGSEGLGSVVD). Residues 23–43 (FLLANARLVLGVGGAAVLGIA) form a helical membrane-spanning segment. The Cytoplasmic segment spans residues 44–454 (TLAVKRLIDR…SGLQVPESLF (411 aa)). Residues 76–113 (ATSPQKPQPPPAAFSQPLATGSPSPSVPVEPTPIHSPT) are disordered.

Belongs to the MID49/MID51 family. As to quaternary structure, interacts with DNM1L.

The protein resides in the mitochondrion outer membrane. Functionally, mitochondrial outer membrane protein which regulates mitochondrial organization. It is required for mitochondrial fission and promotes the recruitment and association of the fission mediator dynamin-related protein 1 (DNM1L) to the mitochondrial surface independently of the mitochondrial fission FIS1 and MFF proteins. Regulates DNM1L GTPase activity. The polypeptide is Mitochondrial dynamics protein MID49 (Mief2) (Mus musculus (Mouse)).